Consider the following 603-residue polypeptide: Myotubularin (603 aa).

Positions 1–13 (MASAPTSKYNSHS) are enriched in polar residues. The interval 1 to 32 (MASAPTSKYNSHSLENESIKRTSRDGVNRDVG) is disordered. 2 positions are modified to phosphoserine: S13 and S18. Residues 14–32 (LENESIKRTSRDGVNRDVG) are compositionally biased toward basic and acidic residues. The 69-residue stretch at 29 to 97 (RDVGETLPRL…GVISRIEKMG (69 aa)) folds into the GRAM domain. The Myotubularin phosphatase domain maps to 163 to 538 (GWTVYNPVEE…RHLELWVNYY (376 aa)). A 1,2-diacyl-sn-glycero-3-phospho-(1D-myo-inositol-3,5-bisphosphate) is bound by residues N288, N313, and I314. The a 1,2-diacyl-sn-glycero-3-phospho-(1D-myo-inositol-3-phosphate) site is built by N288, N313, and I314. C375 functions as the Phosphocysteine intermediate in the catalytic mechanism. A 1,2-diacyl-sn-glycero-3-phospho-(1D-myo-inositol-3,5-bisphosphate)-binding residues include S376, D377, G378, W379, D380, R381, K417, and R421. Positions 376, 377, 378, 379, 380, and 381 each coordinate a 1,2-diacyl-sn-glycero-3-phospho-(1D-myo-inositol-3-phosphate). R421 contributes to the a 1,2-diacyl-sn-glycero-3-phospho-(1D-myo-inositol-3-phosphate) binding site. T495 bears the Phosphothreonine mark. The disordered stretch occupies residues 580-603 (AKLSDPSASPSSPSQMMPHVQTHF). A compositionally biased stretch (low complexity) spans 583 to 593 (SDPSASPSSPS). S588 is modified (phosphoserine).

The protein belongs to the protein-tyrosine phosphatase family. Non-receptor class myotubularin subfamily. Heterodimer with MTMR12. Interacts with KMT2A/MLL1 (via SET domain). Interacts with DES in skeletal muscle but not in cardiac muscle. Interacts with SPEG.

It localises to the cytoplasm. The protein resides in the cell membrane. Its subcellular location is the cell projection. The protein localises to the filopodium. It is found in the ruffle. It localises to the late endosome. The protein resides in the myofibril. Its subcellular location is the sarcomere. The catalysed reaction is a 1,2-diacyl-sn-glycero-3-phospho-(1D-myo-inositol-3-phosphate) + H2O = a 1,2-diacyl-sn-glycero-3-phospho-(1D-myo-inositol) + phosphate. It carries out the reaction a 1,2-diacyl-sn-glycero-3-phospho-(1D-myo-inositol-3,5-bisphosphate) + H2O = a 1,2-diacyl-sn-glycero-3-phospho-(1D-myo-inositol-5-phosphate) + phosphate. The enzyme catalyses 1,2-dioctanoyl-sn-glycero-3-phospho-(1-D-myo-inositol-3-phosphate) + H2O = 1,2-dioctanoyl-sn-glycero-3-phospho-(1D-myo-inositol) + phosphate. It catalyses the reaction 1,2-dioctanoyl-sn-glycero-3-phospho-(1D-myo-inositol-3,5-bisphosphate) + H2O = 1,2-dioctanoyl-sn-glycero-3-phospho-(1D-myo-inositol-5-phosphate) + phosphate. The catalysed reaction is 1,2-dihexadecanoyl-sn-glycero-3-phospho-(1D-myo-inositol-3,5-phosphate) + H2O = 1,2-dihexadecanoyl-sn-glycero-3-phospho-(1D-myo-inositol-5-phosphate) + phosphate. Allosterically activated by phosphatidylinositol 5-phosphate (PI5P). Lipid phosphatase which dephosphorylates phosphatidylinositol 3-monophosphate (PI3P) and phosphatidylinositol 3,5-bisphosphate (PI(3,5)P2). Has also been shown to dephosphorylate phosphotyrosine- and phosphoserine-containing peptides. Negatively regulates EGFR degradation through regulation of EGFR trafficking from the late endosome to the lysosome. Plays a role in vacuolar formation and morphology. Regulates desmin intermediate filament assembly and architecture. Plays a role in mitochondrial morphology and positioning. Required for skeletal muscle maintenance but not for myogenesis. In skeletal muscles, stabilizes MTMR12 protein levels. The polypeptide is Myotubularin (Bos taurus (Bovine)).